A 79-amino-acid polypeptide reads, in one-letter code: Putative defensin-like protein 29 (79 aa).

Residues 1 to 26 (MASSGKCVFLVFLCMVALLAPSEVHA) form the signal peptide. 3 disulfides stabilise this stretch: cysteine 45-cysteine 65, cysteine 51-cysteine 74, and cysteine 55-cysteine 76.

This sequence belongs to the DEFL family.

It is found in the secreted. The chain is Putative defensin-like protein 29 from Arabidopsis thaliana (Mouse-ear cress).